The sequence spans 218 residues: Small ribosomal subunit protein mS34 (218 aa).

This sequence belongs to the mitochondrion-specific ribosomal protein mS34 family. As to quaternary structure, component of the mitochondrial ribosome small subunit (28S) which comprises a 12S rRNA and about 30 distinct proteins. In terms of tissue distribution, widely expressed (at protein liver).

The protein localises to the mitochondrion. Required for mitochondrial translation, plays a role in maintaining the stability of the small ribosomal subunit and the 12S rRNA that are required for mitoribosome formation. In Mus musculus (Mouse), this protein is Small ribosomal subunit protein mS34 (Mrps34).